The sequence spans 391 residues: Candidapepsin-1 (391 aa).

Positions 1 to 18 (MFLKNIFIALAIALLVDA) are cleaved as a signal peptide. A propeptide spans 19-50 (SPAKRSPGFVTLDFDVIKTPVNATGQEGKVKR) (activation peptide). Asn-40 carries N-linked (GlcNAc...) asparagine glycosylation. One can recognise a Peptidase A1 domain in the interval 64 to 377 (YAADITIGSN…DLDDDKISLA (314 aa)). Residue Asp-82 is part of the active site. Cysteines 97 and 109 form a disulfide. The active site involves Asp-267. Cys-305 and Cys-343 are joined by a disulfide.

It belongs to the peptidase A1 family. In terms of processing, O-glycosylated.

It localises to the secreted. The enzyme catalyses Preferential cleavage at the carboxyl of hydrophobic amino acids, but fails to cleave 15-Leu-|-Tyr-16, 16-Tyr-|-Leu-17 and 24-Phe-|-Phe-25 of insulin B chain. Activates trypsinogen, and degrades keratin.. This is Candidapepsin-1 (SAP1) from Candida albicans (strain WO-1) (Yeast).